The chain runs to 204 residues: Methylthioribulose-1-phosphate dehydratase (204 aa).

2 residues coordinate Zn(2+): histidine 94 and histidine 96.

This sequence belongs to the aldolase class II family. MtnB subfamily. Requires Zn(2+) as cofactor.

The catalysed reaction is 5-(methylsulfanyl)-D-ribulose 1-phosphate = 5-methylsulfanyl-2,3-dioxopentyl phosphate + H2O. Its pathway is amino-acid biosynthesis; L-methionine biosynthesis via salvage pathway; L-methionine from S-methyl-5-thio-alpha-D-ribose 1-phosphate: step 2/6. Functionally, catalyzes the dehydration of methylthioribulose-1-phosphate (MTRu-1-P) into 2,3-diketo-5-methylthiopentyl-1-phosphate (DK-MTP-1-P). The chain is Methylthioribulose-1-phosphate dehydratase from Enterobacter sp. (strain 638).